Here is a 162-residue protein sequence, read N- to C-terminus: Putative ankyrin repeat protein RBE_0151 (162 aa).

ANK repeat units follow at residues 49 to 77 (EKWTDLHLAVGYKNIKLVQSVCNKHNINI), 81 to 110 (KGRTALELAILGDNLEIVQFLVQNGGVVAP), and 114 to 145 (YGWSAIHLAIKVGNLDIVKYLYENTKFNEHDK).

This chain is Putative ankyrin repeat protein RBE_0151, found in Rickettsia bellii (strain RML369-C).